A 474-amino-acid polypeptide reads, in one-letter code: 1-aminocyclopropane-1-carboxylate synthase 4 (474 aa).

2 residues coordinate substrate: glutamate 47 and tyrosine 85. Lysine 273 is subject to N6-(pyridoxal phosphate)lysine.

This sequence belongs to the class-I pyridoxal-phosphate-dependent aminotransferase family. Homodimer and heterodimer. In vivo, the relevance of heterodimerization with other ACS enzymes is however unsure. Interacts with XBAT32. Interacts (via its C-terminal region) with ETO1 and EOL1. The cofactor is pyridoxal 5'-phosphate. In terms of processing, ubiquitinated by XBAT32. Ubiquitination probably leads to its subsequent degradation, thus controlling ethylene production. In terms of tissue distribution, expressed in roots, leaves and flowers.

It catalyses the reaction S-adenosyl-L-methionine = 1-aminocyclopropane-1-carboxylate + S-methyl-5'-thioadenosine + H(+). It functions in the pathway alkene biosynthesis; ethylene biosynthesis via S-adenosyl-L-methionine; ethylene from S-adenosyl-L-methionine: step 1/2. Its function is as follows. 1-aminocyclopropane-1-carboxylate synthase (ACS) enzymes catalyze the conversion of S-adenosyl-L-methionine (SAM) into 1-aminocyclopropane-1-carboxylate (ACC), a direct precursor of ethylene. The polypeptide is 1-aminocyclopropane-1-carboxylate synthase 4 (ACS4) (Arabidopsis thaliana (Mouse-ear cress)).